Here is a 325-residue protein sequence, read N- to C-terminus: MRRLGSVQQKIPCVFLTEVRDEPSRKRDCQQFQVVATENVSPAALASDVHCAAATEKVDGTCCYVTTFNGEPYLWARLDRKPTKQADKRFKKYQYSQKTCKGFVWNVNEDFREVPEFWMAAHRVQHENGHPVPDEHGHIPGWVPVDHTNKQYCWHSSVVNYGTGVALVLKTHGEDEGQLEIVSVPLADLMEQTLELIGTNVNGNPYGLGSKKHPVHVLVPHGVLRIRNPPAVEFQQICSWFQECQEGRVEGIVWHCDDGMLIKIHRHHLGLKWPVADTFLNTRPVVVHVDESDADPCASEKDLFKSFSSVNRQTFSSVRDIQFEP.

The cofactor is Mg(2+). Mn(2+) is required as a cofactor. Post-translationally, AMPylates itself (auto-AMPylation).

The enzyme catalyses ATP + (ribonucleotide)n-3'-hydroxyl + 5'-phospho-(ribonucleotide)m = (ribonucleotide)n+m + AMP + diphosphate.. In terms of biological role, functions as an RNA ligase, in vitro. The ligation reaction entails three nucleotidyl transfer steps. In the first step, the RNA ligase reacts with ATP in the absence of nucleic acid to form a covalent ligase-AMP intermediate and release pyrophosphate. In step 2, the ligase-AMP binds to the nucleic acid and transfers the adenylate to the 5'-PO4 terminus to form an adenylylated intermediate. In step 3, the RNA ligase directs the attack of the 3'-OH on the 5'-phosphoanhydride linkage, resulting in a repaired 3'-5' phosphodiester and release of AMP. Exhibits selectivity for single-stranded RNA substrates and may not have nick-sealing activity on double-stranded DNA-RNA hybrids. May play a role in maintaining RNA integrity under stress conditions, for example in response to reactive oxygen species (ROS). The polypeptide is RNA ligase 1 (Danio rerio (Zebrafish)).